The primary structure comprises 152 residues: Transcriptional regulator MraZ (152 aa).

SpoVT-AbrB domains are found at residues 5–52 (TSAI…PLPE) and 81–124 (ASDC…HDTA).

The protein belongs to the MraZ family. In terms of assembly, forms oligomers.

The protein resides in the cytoplasm. The protein localises to the nucleoid. This is Transcriptional regulator MraZ from Colwellia psychrerythraea (strain 34H / ATCC BAA-681) (Vibrio psychroerythus).